Reading from the N-terminus, the 625-residue chain is tRNA uridine 5-carboxymethylaminomethyl modification enzyme MnmG (625 aa).

An FAD-binding site is contributed by 14–19; sequence GAGHAG. 273 to 287 contacts NAD(+); sequence GPRYCPSIEDKIVRF.

The protein belongs to the MnmG family. In terms of assembly, homodimer. Heterotetramer of two MnmE and two MnmG subunits. FAD serves as cofactor.

The protein localises to the cytoplasm. Functionally, NAD-binding protein involved in the addition of a carboxymethylaminomethyl (cmnm) group at the wobble position (U34) of certain tRNAs, forming tRNA-cmnm(5)s(2)U34. The protein is tRNA uridine 5-carboxymethylaminomethyl modification enzyme MnmG of Clostridium botulinum (strain Hall / ATCC 3502 / NCTC 13319 / Type A).